We begin with the raw amino-acid sequence, 889 residues long: Alanine--tRNA ligase (889 aa).

Zn(2+) is bound by residues His-569, His-573, Cys-671, and His-675.

The protein belongs to the class-II aminoacyl-tRNA synthetase family. It depends on Zn(2+) as a cofactor.

Its subcellular location is the cytoplasm. The catalysed reaction is tRNA(Ala) + L-alanine + ATP = L-alanyl-tRNA(Ala) + AMP + diphosphate. Functionally, catalyzes the attachment of alanine to tRNA(Ala) in a two-step reaction: alanine is first activated by ATP to form Ala-AMP and then transferred to the acceptor end of tRNA(Ala). Also edits incorrectly charged Ser-tRNA(Ala) and Gly-tRNA(Ala) via its editing domain. This Parasynechococcus marenigrum (strain WH8102) protein is Alanine--tRNA ligase.